The following is a 506-amino-acid chain: Allantoinase (506 aa).

Zn(2+)-binding residues include His105, His107, Lys195, His231, His292, and Asp366. Lys195 is modified (N6-carboxylysine).

Belongs to the metallo-dependent hydrolases superfamily. Allantoinase family. As to quaternary structure, homotetramer. Zn(2+) serves as cofactor. Post-translationally, carboxylation allows a single lysine to coordinate two zinc ions.

The enzyme catalyses (S)-allantoin + H2O = allantoate + H(+). It functions in the pathway nitrogen metabolism; (S)-allantoin degradation; allantoate from (S)-allantoin: step 1/1. In terms of biological role, catalyzes the conversion of allantoin (5-ureidohydantoin) to allantoate by hydrolytic cleavage of the five-member hydantoin ring. Catalyzes the first step of the ureide allantoin degradation followed by the sequential activity of AAH, UGLYAH and UAH which allows a complete purine breakdown without the intermediate generation of urea. The chain is Allantoinase (ALN) from Arabidopsis thaliana (Mouse-ear cress).